A 343-amino-acid chain; its full sequence is Glyceraldehyde-3-phosphate dehydrogenase 1 (343 aa).

Residues 13–14 (RI), aspartate 35, arginine 79, and serine 121 each bind NAD(+). D-glyceraldehyde 3-phosphate is bound by residues 154-156 (SCT), threonine 185, 214-215 (TG), and arginine 237. Cysteine 155 functions as the Nucleophile in the catalytic mechanism. Asparagine 319 contributes to the NAD(+) binding site.

It belongs to the glyceraldehyde-3-phosphate dehydrogenase family. Homotetramer.

The protein resides in the cytoplasm. The enzyme catalyses D-glyceraldehyde 3-phosphate + phosphate + NAD(+) = (2R)-3-phospho-glyceroyl phosphate + NADH + H(+). Its pathway is carbohydrate degradation; glycolysis; pyruvate from D-glyceraldehyde 3-phosphate: step 1/5. In terms of biological role, catalyzes the oxidative phosphorylation of glyceraldehyde 3-phosphate (G3P) to 1,3-bisphosphoglycerate (BPG) using the cofactor NAD. The first reaction step involves the formation of a hemiacetal intermediate between G3P and a cysteine residue, and this hemiacetal intermediate is then oxidized to a thioester, with concomitant reduction of NAD to NADH. The reduced NADH is then exchanged with the second NAD, and the thioester is attacked by a nucleophilic inorganic phosphate to produce BPG. This chain is Glyceraldehyde-3-phosphate dehydrogenase 1 (gap1), found in Nostoc sp. (strain PCC 7120 / SAG 25.82 / UTEX 2576).